A 491-amino-acid chain; its full sequence is N-succinylglutamate 5-semialdehyde dehydrogenase (491 aa).

Residue 225-230 (GSSTVG) coordinates NAD(+). Active-site residues include E248 and C282.

The protein belongs to the aldehyde dehydrogenase family. AstD subfamily.

The catalysed reaction is N-succinyl-L-glutamate 5-semialdehyde + NAD(+) + H2O = N-succinyl-L-glutamate + NADH + 2 H(+). It participates in amino-acid degradation; L-arginine degradation via AST pathway; L-glutamate and succinate from L-arginine: step 4/5. In terms of biological role, catalyzes the NAD-dependent reduction of succinylglutamate semialdehyde into succinylglutamate. This is N-succinylglutamate 5-semialdehyde dehydrogenase from Marinobacter nauticus (strain ATCC 700491 / DSM 11845 / VT8) (Marinobacter aquaeolei).